The chain runs to 179 residues: Large ribosomal subunit protein uL6 (179 aa).

It belongs to the universal ribosomal protein uL6 family. As to quaternary structure, part of the 50S ribosomal subunit.

Functionally, this protein binds to the 23S rRNA, and is important in its secondary structure. It is located near the subunit interface in the base of the L7/L12 stalk, and near the tRNA binding site of the peptidyltransferase center. The protein is Large ribosomal subunit protein uL6 of Saccharopolyspora erythraea (strain ATCC 11635 / DSM 40517 / JCM 4748 / NBRC 13426 / NCIMB 8594 / NRRL 2338).